The following is a 237-amino-acid chain: Purine nucleoside phosphorylase DeoD-type (237 aa).

His4 lines the a purine D-ribonucleoside pocket. Phosphate contacts are provided by residues Gly20, Arg24, Arg43, and 87-90 (RVGS). Residues 179–181 (EME) and 203–204 (SD) each bind a purine D-ribonucleoside. The Proton donor role is filled by Asp204.

It belongs to the PNP/UDP phosphorylase family. In terms of assembly, homohexamer; trimer of homodimers.

The catalysed reaction is a purine D-ribonucleoside + phosphate = a purine nucleobase + alpha-D-ribose 1-phosphate. It catalyses the reaction a purine 2'-deoxy-D-ribonucleoside + phosphate = a purine nucleobase + 2-deoxy-alpha-D-ribose 1-phosphate. In terms of biological role, catalyzes the reversible phosphorolytic breakdown of the N-glycosidic bond in the beta-(deoxy)ribonucleoside molecules, with the formation of the corresponding free purine bases and pentose-1-phosphate. The protein is Purine nucleoside phosphorylase DeoD-type of Dichelobacter nodosus (strain VCS1703A).